The following is a 514-amino-acid chain: Alstonine synthase (514 aa).

The chain crosses the membrane as a helical span at residues 4 to 24 (PQFSCLLPAFFLLVVFLFLLI). The N-linked (GlcNAc...) asparagine glycan is linked to Asn428. Cys450 serves as a coordination point for heme.

This sequence belongs to the cytochrome P450 family. Requires heme as cofactor.

The protein resides in the membrane. The catalysed reaction is tetrahydroalstonine + A + reduced [NADPH--hemoprotein reductase] + O2 = alstonine + AH2 + oxidized [NADPH--hemoprotein reductase] + 2 H2O + H(+). The protein operates within alkaloid biosynthesis. In terms of biological role, a cytochrome P450 monooxygenase involved in the biosynthesis of pentacyclic alkaloids natural products such as alstonine, putative antipsychotic compounds. Catalyzes the conversion of tetrahydroalstonine to alstonine. No oxidative activity towards ajmalicine. This chain is Alstonine synthase, found in Alstonia scholaris (Dogbane).